Reading from the N-terminus, the 1301-residue chain is ABC transporter BEA3 (1301 aa).

The tract at residues 1 to 30 (MGKRTAENSAANGEGEEKHPEIGVDGRPEK) is disordered. A compositionally biased stretch (basic and acidic residues) spans 15-30 (GEEKHPEIGVDGRPEK). The next 4 membrane-spanning stretches (helical) occupy residues 54–74 (VGVIASIGVGITLPLLNIVFG), 103–123 (LYLLGLFLGRLVLGYITNFAF), 177–197 (LGVFVEYNATMIASIIVAFIY), and 203–223 (LVTFTAVVFITFSVSLVLPYI). Residues 54–345 (VGVIASIGVG…ISTPLLAVSK (292 aa)) form the ABC transmembrane type-1 1 domain. Asn-229 is a glycosylation site (N-linked (GlcNAc...) asparagine). Helical transmembrane passes span 281 to 301 (FIALQYGLVFFSSYAAFGLAF) and 313 to 333 (INQLGAIIVVLFSVMMIVTAM). Residues 378 to 667 (IILEDVTFAY…EAGLYYNLVN (290 aa)) enclose the ABC transporter 1 domain. 413 to 420 (GPSGSGKS) lines the ATP pocket. The span at 442–454 (VEKPTDKKNNGGK) shows a compositional bias: basic and acidic residues. The disordered stretch occupies residues 442 to 461 (VEKPTDKKNNGGKEEDEQEL). 2 N-linked (GlcNAc...) asparagine glycosylation sites follow: Asn-511 and Asn-618. Residues 682 to 708 (VIAKEERPSSVHEKAHTESTIEEKPLE) form a disordered region. Residues 735-1024 (ALTLFFSACA…ALSFGPNVAQ (290 aa)) form the ABC transmembrane type-1 2 domain. 6 consecutive transmembrane segments (helical) span residues 745 to 765 (GAAVPFQAWLFAKVIIVFGYL), 779 to 799 (SLMWTVLAISAGLAYCATFFL), 858 to 878 (SVFIALWTLMGTIAIALAFAW), 880 to 900 (LALVSLCVVVPILLAAGYWRM), 961 to 981 (WVSLLYAFSDSATIGCQAIVL), and 987 to 1007 (LLLSGEYDLESFFVCFMSVLN). An ABC transporter 2 domain is found at 1060–1296 (IELENIYFKY…RGVYWQMCQS (237 aa)). 1094 to 1101 (GASGSGKS) lines the ATP pocket.

It belongs to the ABC transporter superfamily. ABCB family. Multidrug resistance exporter (TC 3.A.1.201) subfamily.

It localises to the cell membrane. In terms of biological role, ABC transporter; part of the gene cluster that mediates the biosynthesis of beauvericin (BEA), a non-ribosomal cyclic hexadepsipeptide that shows antibiotic, antifungal, insecticidal, and cancer cell antiproliferative and antihaptotactic activity. Functions as a regulator of beauvericin production, rather than in BEA transport out of the cell. Beauvericin has low toxicity to the producing fungus and BEA3 does not play a role in detoxification and self-protection of the producing fungus. The polypeptide is ABC transporter BEA3 (Gibberella fujikuroi (strain CBS 195.34 / IMI 58289 / NRRL A-6831) (Bakanae and foot rot disease fungus)).